Reading from the N-terminus, the 573-residue chain is Sulfite reductase [NADPH] hemoprotein beta-component (573 aa).

Residues 1-20 are disordered; sequence MAKVELKAPDGPPSDVERIK. The [4Fe-4S] cluster site is built by cysteine 438, cysteine 444, cysteine 483, and cysteine 487. Residue cysteine 487 coordinates siroheme.

It belongs to the nitrite and sulfite reductase 4Fe-4S domain family. In terms of assembly, alpha(8)-beta(8). The alpha component is a flavoprotein, the beta component is a hemoprotein. Requires siroheme as cofactor. It depends on [4Fe-4S] cluster as a cofactor.

The enzyme catalyses hydrogen sulfide + 3 NADP(+) + 3 H2O = sulfite + 3 NADPH + 4 H(+). It participates in sulfur metabolism; hydrogen sulfide biosynthesis; hydrogen sulfide from sulfite (NADPH route): step 1/1. Component of the sulfite reductase complex that catalyzes the 6-electron reduction of sulfite to sulfide. This is one of several activities required for the biosynthesis of L-cysteine from sulfate. The sequence is that of Sulfite reductase [NADPH] hemoprotein beta-component from Geobacillus kaustophilus (strain HTA426).